Consider the following 430-residue polypeptide: Enolase (430 aa).

Glutamine 167 contacts (2R)-2-phosphoglycerate. The active-site Proton donor is the glutamate 209. Mg(2+)-binding residues include aspartate 246, glutamate 289, and aspartate 316. 4 residues coordinate (2R)-2-phosphoglycerate: lysine 341, arginine 370, serine 371, and lysine 392. The active-site Proton acceptor is the lysine 341.

It belongs to the enolase family. As to quaternary structure, component of the RNA degradosome, a multiprotein complex involved in RNA processing and mRNA degradation. Mg(2+) is required as a cofactor.

The protein resides in the cytoplasm. Its subcellular location is the secreted. It localises to the cell surface. It catalyses the reaction (2R)-2-phosphoglycerate = phosphoenolpyruvate + H2O. Its pathway is carbohydrate degradation; glycolysis; pyruvate from D-glyceraldehyde 3-phosphate: step 4/5. Functionally, catalyzes the reversible conversion of 2-phosphoglycerate (2-PG) into phosphoenolpyruvate (PEP). It is essential for the degradation of carbohydrates via glycolysis. In Idiomarina loihiensis (strain ATCC BAA-735 / DSM 15497 / L2-TR), this protein is Enolase.